We begin with the raw amino-acid sequence, 362 residues long: Phosphoserine aminotransferase (362 aa).

R42 serves as a coordination point for L-glutamate. Pyridoxal 5'-phosphate contacts are provided by W102, T154, D174, and Q197. K198 bears the N6-(pyridoxal phosphate)lysine mark. A pyridoxal 5'-phosphate-binding site is contributed by 239-240 (NT).

Belongs to the class-V pyridoxal-phosphate-dependent aminotransferase family. SerC subfamily. In terms of assembly, homodimer. Pyridoxal 5'-phosphate is required as a cofactor.

The protein resides in the cytoplasm. The catalysed reaction is O-phospho-L-serine + 2-oxoglutarate = 3-phosphooxypyruvate + L-glutamate. It carries out the reaction 4-(phosphooxy)-L-threonine + 2-oxoglutarate = (R)-3-hydroxy-2-oxo-4-phosphooxybutanoate + L-glutamate. It functions in the pathway amino-acid biosynthesis; L-serine biosynthesis; L-serine from 3-phospho-D-glycerate: step 2/3. Its pathway is cofactor biosynthesis; pyridoxine 5'-phosphate biosynthesis; pyridoxine 5'-phosphate from D-erythrose 4-phosphate: step 3/5. Catalyzes the reversible conversion of 3-phosphohydroxypyruvate to phosphoserine and of 3-hydroxy-2-oxo-4-phosphonooxybutanoate to phosphohydroxythreonine. This is Phosphoserine aminotransferase from Haemophilus ducreyi (strain 35000HP / ATCC 700724).